Here is a 151-residue protein sequence, read N- to C-terminus: Small ribosomal subunit protein uS11 (151 aa).

Residues 130–151 are disordered; sequence EDVTPIPSDSTRRKGGRRGRRL. Residues 142–151 show a composition bias toward basic residues; it reads RKGGRRGRRL.

This sequence belongs to the universal ribosomal protein uS11 family.

This is Small ribosomal subunit protein uS11 from Aedes aegypti (Yellowfever mosquito).